A 450-amino-acid polypeptide reads, in one-letter code: 3-phosphoshikimate 1-carboxyvinyltransferase (450 aa).

Residues lysine 28, serine 29, and arginine 33 each coordinate 3-phosphoshikimate. Lysine 28 provides a ligand contact to phosphoenolpyruvate. Residues glycine 100 and arginine 128 each coordinate phosphoenolpyruvate. Positions 173, 175, 326, and 353 each coordinate 3-phosphoshikimate. Glutamine 175 contributes to the phosphoenolpyruvate binding site. Aspartate 326 serves as the catalytic Proton acceptor. Phosphoenolpyruvate contacts are provided by arginine 357 and arginine 402.

Belongs to the EPSP synthase family. In terms of assembly, monomer.

The protein localises to the cytoplasm. The enzyme catalyses 3-phosphoshikimate + phosphoenolpyruvate = 5-O-(1-carboxyvinyl)-3-phosphoshikimate + phosphate. It participates in metabolic intermediate biosynthesis; chorismate biosynthesis; chorismate from D-erythrose 4-phosphate and phosphoenolpyruvate: step 6/7. Its function is as follows. Catalyzes the transfer of the enolpyruvyl moiety of phosphoenolpyruvate (PEP) to the 5-hydroxyl of shikimate-3-phosphate (S3P) to produce enolpyruvyl shikimate-3-phosphate and inorganic phosphate. The protein is 3-phosphoshikimate 1-carboxyvinyltransferase of Brucella abortus (strain S19).